The primary structure comprises 418 residues: Sonic hedgehog protein (418 aa).

The signal sequence occupies residues 1 to 23 (MRLLTRVLLVSLLTLSLVVSGLA). A lipid anchor (N-palmitoyl cysteine) is attached at Cys24. The Cardin-Weintraub motif lies at 32–38 (RRRHPKK). The Ca(2+) site is built by Glu89, Glu90, Asp95, Thr125, Glu126, Asp129, and Asp131. Zn(2+)-binding residues include His140, Asp147, and His182. Residue Gly197 is the site of Cholesterol glycine ester attachment.

This sequence belongs to the hedgehog family. Interacts with HHATL/GUP1 which negatively regulates HHAT-mediated palmitoylation of the SHH N-terminus. Interacts with BOC and CDON. Interacts with HHIP. Interacts with DISP1 via its cholesterol anchor. Interacts with SCUBE2. As to quaternary structure, multimer. In terms of processing, the C-terminal domain displays an autoproteolysis activity and a cholesterol transferase activity. Both activities result in the cleavage of the full-length protein and covalent attachment of a cholesterol moiety to the C-terminal of the newly generated N-terminal fragment (ShhN). Cholesterylation is required for the sonic hedgehog protein N-product targeting to lipid rafts and multimerization. ShhN is the active species in both local and long-range signaling, whereas the C-product (ShhC) is degraded in the reticulum endoplasmic. Post-translationally, N-palmitoylation by HHAT of ShhN is required for sonic hedgehog protein N-product multimerization and full activity. It is a prerequisite for the membrane-proximal positioning and the subsequent shedding of this N-terminal peptide. The lipidated N- and C-terminal peptides of ShhNp can be cleaved (shedding). The N-terminal palmitoylated peptide is cleaved at the Cardin-Weintraub (CW) motif site. The cleavage reduced the interactions with heparan sulfate. The cleavage is enhanced by SCUBE2. Expressed in the ventral midline of the neural tube and brain. Also found in the notochord and in developing fin bud. In the developing brain, expression occurs in domains that include a discrete region in the floor of the diencephalon.

It is found in the endoplasmic reticulum membrane. Its subcellular location is the golgi apparatus membrane. The protein localises to the cell membrane. The catalysed reaction is glycyl-L-cysteinyl-[protein] + cholesterol + H(+) = [protein]-C-terminal glycyl cholesterol ester + N-terminal L-cysteinyl-[protein]. Functionally, the C-terminal part of the sonic hedgehog protein precursor displays an autoproteolysis and a cholesterol transferase activity. Both activities result in the cleavage of the full-length protein into two parts (ShhN and ShhC) followed by the covalent attachment of a cholesterol moiety to the C-terminal of the newly generated ShhN. Both activities occur in the endoplasmic reticulum. Once cleaved, ShhC is degraded in the endoplasmic reticulum. In terms of biological role, the dually lipidated sonic hedgehog protein N-product (ShhNp) is a morphogen which is essential for a variety of patterning events during development. Involved in dorso-ventral patterning of the brain and in early patterning of the developing eyes. Binds to the patched (PTCH1) receptor, which functions in association with smoothened (SMO), to activate the transcription of target genes. In the absence of SHH, PTCH1 represses the constitutive signaling activity of SMO. In Danio rerio (Zebrafish), this protein is Sonic hedgehog protein (shha).